The sequence spans 315 residues: GPN-loop GTPase 2 (315 aa).

GTP is bound at residue 12 to 17 (GSGKST). The Gly-Pro-Asn (GPN)-loop; involved in dimer interface motif lies at 69 to 71 (GPN). 172–175 (SKAD) serves as a coordination point for GTP.

This sequence belongs to the GPN-loop GTPase family. As to quaternary structure, heterodimers with gpn1 or fet5/gpn3. Binds to RNA polymerase II (RNAPII).

It is found in the cytoplasm. The protein localises to the nucleus. Small GTPase required for proper nuclear import of RNA polymerase II and III (RNAPII and RNAPIII). May act at an RNAP assembly step prior to nuclear import. In Schizosaccharomyces pombe (strain 972 / ATCC 24843) (Fission yeast), this protein is GPN-loop GTPase 2.